A 498-amino-acid chain; its full sequence is Aminotransferase swnA (498 aa).

The protein belongs to the class-I pyridoxal-phosphate-dependent aminotransferase family. It depends on pyridoxal 5'-phosphate as a cofactor.

It functions in the pathway mycotoxin biosynthesis. Functionally, aminotransferase; part of the gene cluster that mediates the biosynthesis of swainsonine (SW), a cytotoxic fungal alkaloid and a potential cancer therapy drug. Swainsonine production occurs via a multibranched pathway and is dispensable for fungal colonization of plants and infection of insect hosts. The first step of swainsonine biosynthesis is the production of the precursor pipecolic acid (PA) via conversion of L-lysine (Lys) to 1-piperideine-6-carboxylate (P6C) by the aminotransferase swnA, the latter being further reduced to PA by the reductase swnR. PA can be converted from lysine by both the SW biosynthetic cluster and the unclustered genes such as lysine cyclodeaminase. The PKS-NRPS hybrid synthetase swnK uptakes and condensates PA and malonyl-CoA with and without skipping of the ketoreductase (KR) domain in order to produce 3 intermediates, 1-oxoindolizidine, (1S)-1-hydroxyindolizin, and (1R)-1-hydroxyindolizine; with the transisomer (1S)-1-hydroxyindolizin being predominant. The terminal thioester reductase (TE) domain of swnK is involved in reduction of the thioester bond to release the intermediate aldehydes. The oxidoreductase swnN could contribute to the reduction of 1-oxoindolizidine to (1S)-1-hydroxyindolizin and (1R)-1-hydroxyindolizine, contributing to the major route of SW production. The dioxygenase swnH2 would be responsible for the oxidization of (1R)-1-hydroxyindolizine into (1R,2S)-1,2-dihydroxyindolizine and of (1S)-1-hydroxyindolizin to yield both (1R,2S)-1,2-dihydroxyindolizine and (1S,2S)-1,2-dihydroxyindolizine. The dioxygenase swnH1 then performs the conversion of the 1,2-dihydroxyindolizine epimers to SW. The protein is Aminotransferase swnA of Metarhizium robertsii (strain ARSEF 23 / ATCC MYA-3075) (Metarhizium anisopliae (strain ARSEF 23)).